The primary structure comprises 200 residues: Glutathione S-transferase 1-1 (200 aa).

The GST N-terminal domain occupies 1–73 (GSSPCRSVIM…YLVEKYGKTD (73 aa)). Residues Ser-2, 43–45 (HTI), and 57–59 (ESR) contribute to the glutathione site. Residues 79–200 (CPKKRAVINQ…AGCLEFKKYF (122 aa)) form the GST C-terminal domain.

Belongs to the GST superfamily. Theta family. Homodimer.

It carries out the reaction RX + glutathione = an S-substituted glutathione + a halide anion + H(+). The catalysed reaction is 1,1,1-trichloro-2,2-bis(4-chlorophenyl)ethane = 1,1-dichloro-2,2-bis(4-chlorophenyl)ethylene + chloride + H(+). Conjugation of reduced glutathione to a wide number of exogenous and endogenous hydrophobic electrophiles. Has DDT dehydrochlorinase activity. In Drosophila teissieri (Fruit fly), this protein is Glutathione S-transferase 1-1 (GstD1).